The sequence spans 216 residues: 3-keto-L-gulonate-6-phosphate decarboxylase UlaD (216 aa).

Substrate is bound at residue Asp-11. Residues Glu-33 and Asp-62 each contribute to the Mg(2+) site. Arg-192 contributes to the substrate binding site.

It belongs to the HPS/KGPDC family. KGPDC subfamily. Homodimer. Requires Mg(2+) as cofactor.

It carries out the reaction 3-dehydro-L-gulonate 6-phosphate + H(+) = L-xylulose 5-phosphate + CO2. The protein operates within cofactor degradation; L-ascorbate degradation; D-xylulose 5-phosphate from L-ascorbate: step 2/4. In terms of biological role, catalyzes the decarboxylation of 3-keto-L-gulonate-6-P into L-xylulose-5-P. Is involved in the anaerobic L-ascorbate utilization. The chain is 3-keto-L-gulonate-6-phosphate decarboxylase UlaD from Salmonella choleraesuis (strain SC-B67).